Here is a 261-residue protein sequence, read N- to C-terminus: Cytochrome c oxidase subunit 3 (261 aa).

The Mitochondrial matrix portion of the chain corresponds to 1-15 (MAHQAHAYHMVDPSP). The helical transmembrane segment at 16–34 (WPLTGAIGALFLTSGLAIW) threads the bilayer. The Mitochondrial intermembrane segment spans residues 35 to 40 (FHFQSV). Residues 41–66 (TLLTLGLILLLLTMYQWWRDIIREGT) form a helical membrane-spanning segment. The Mitochondrial matrix segment spans residues 67 to 72 (FQGHHT). The helical transmembrane segment at 73-105 (PPVQKGLRYGMILFITSEVFFFLGFFWAFYHSS) threads the bilayer. Over 106 to 128 (LAPTPELGGCWPPTGITPLDPFE) the chain is Mitochondrial intermembrane. Residues 129–152 (VPLLNTAVLLASGVTVTWAHHSLM) traverse the membrane as a helical segment. Residues 153-155 (EGA) lie on the Mitochondrial matrix side of the membrane. Residues 156 to 183 (RKQAIQALALTIILGVYFTALQAMEYYE) traverse the membrane as a helical segment. The Mitochondrial intermembrane portion of the chain corresponds to 184–190 (APFTIAD). A helical membrane pass occupies residues 191 to 223 (GVYGSTFFVATGFHGLHVIIGSSFLAVCLLRQI). Residues 224 to 232 (QYHFTSEHH) lie on the Mitochondrial matrix side of the membrane. A helical transmembrane segment spans residues 233 to 256 (FGFEAAAWYWHFVDVVWLFLYVSI). Residues 257–261 (YWWGS) are Mitochondrial intermembrane-facing.

It belongs to the cytochrome c oxidase subunit 3 family. Component of the cytochrome c oxidase (complex IV, CIV), a multisubunit enzyme composed of 14 subunits. The complex is composed of a catalytic core of 3 subunits MT-CO1, MT-CO2 and MT-CO3, encoded in the mitochondrial DNA, and 11 supernumerary subunits COX4I, COX5A, COX5B, COX6A, COX6B, COX6C, COX7A, COX7B, COX7C, COX8 and NDUFA4, which are encoded in the nuclear genome. The complex exists as a monomer or a dimer and forms supercomplexes (SCs) in the inner mitochondrial membrane with NADH-ubiquinone oxidoreductase (complex I, CI) and ubiquinol-cytochrome c oxidoreductase (cytochrome b-c1 complex, complex III, CIII), resulting in different assemblies (supercomplex SCI(1)III(2)IV(1) and megacomplex MCI(2)III(2)IV(2)).

Its subcellular location is the mitochondrion inner membrane. The catalysed reaction is 4 Fe(II)-[cytochrome c] + O2 + 8 H(+)(in) = 4 Fe(III)-[cytochrome c] + 2 H2O + 4 H(+)(out). Its function is as follows. Component of the cytochrome c oxidase, the last enzyme in the mitochondrial electron transport chain which drives oxidative phosphorylation. The respiratory chain contains 3 multisubunit complexes succinate dehydrogenase (complex II, CII), ubiquinol-cytochrome c oxidoreductase (cytochrome b-c1 complex, complex III, CIII) and cytochrome c oxidase (complex IV, CIV), that cooperate to transfer electrons derived from NADH and succinate to molecular oxygen, creating an electrochemical gradient over the inner membrane that drives transmembrane transport and the ATP synthase. Cytochrome c oxidase is the component of the respiratory chain that catalyzes the reduction of oxygen to water. Electrons originating from reduced cytochrome c in the intermembrane space (IMS) are transferred via the dinuclear copper A center (CU(A)) of subunit 2 and heme A of subunit 1 to the active site in subunit 1, a binuclear center (BNC) formed by heme A3 and copper B (CU(B)). The BNC reduces molecular oxygen to 2 water molecules using 4 electrons from cytochrome c in the IMS and 4 protons from the mitochondrial matrix. This is Cytochrome c oxidase subunit 3 (mt-co3) from Formosania lacustris (Oriental stream loach).